We begin with the raw amino-acid sequence, 279 residues long: MAFQGTSRTLTQQSSAATSDELQKILFSPEAIKKMAAECDLGRHHWMRADNAISVRPLVPEVTHGRIASFFKSGYDAGELCSKGCVSVPQVLCAVTRTVSTDAEGSLRIYLPDLGDKELSPIDKQCVTLHNHHLPALVSFQPTYDCPMETVGNRKRCFAVVIERHGYIGYTGTTASVCSNWQARFSSKNNNYTHIAAGKTLVLPFNRLAEQTKPSAVARLLKSQLNNMGSSQYVLTDSKINQNARSESEELNVESPPAAIGSSVASRFESFRPQVVNGL.

The protein belongs to the cucumovirus movement protein family.

The protein resides in the host cell junction. The protein localises to the host plasmodesma. Functionally, transports viral genome to neighboring plant cells directly through plasmosdesmata, without any budding. The movement protein allows efficient cell to cell propagation, by bypassing the host cell wall barrier. Acts by forming a tubular structure at the host plasmodesmata, enlarging it enough to allow free passage of virion capsids. This chain is Movement protein, found in Cucumber mosaic virus (strain As) (CMV).